Reading from the N-terminus, the 350-residue chain is Dihydroorotase (350 aa).

Residues histidine 17 and histidine 19 each contribute to the Zn(2+) site. Substrate is bound by residues 19 to 21 and asparagine 45; that span reads HLR. Positions 103, 140, and 178 each coordinate Zn(2+). Lysine 103 carries the N6-carboxylysine modification. Histidine 140 provides a ligand contact to substrate. Substrate is bound at residue leucine 224. Aspartate 252 serves as a coordination point for Zn(2+). Aspartate 252 is a catalytic residue. Histidine 256 and alanine 268 together coordinate substrate.

Belongs to the metallo-dependent hydrolases superfamily. DHOase family. Class II DHOase subfamily. As to quaternary structure, homodimer. Zn(2+) is required as a cofactor.

The enzyme catalyses (S)-dihydroorotate + H2O = N-carbamoyl-L-aspartate + H(+). The protein operates within pyrimidine metabolism; UMP biosynthesis via de novo pathway; (S)-dihydroorotate from bicarbonate: step 3/3. Catalyzes the reversible cyclization of carbamoyl aspartate to dihydroorotate. The sequence is that of Dihydroorotase from Buchnera aphidicola subsp. Acyrthosiphon pisum (strain 5A).